A 677-amino-acid polypeptide reads, in one-letter code: Methionine--tRNA ligase (677 aa).

The short motif at 15 to 25 (PYANGSIHLGH) is the 'HIGH' region element. Zn(2+)-binding residues include Cys146, Cys149, Cys159, and Cys162. Residues 333–337 (KMSKS) carry the 'KMSKS' region motif. Lys336 contributes to the ATP binding site. In terms of domain architecture, tRNA-binding spans 575-677 (DFAKIDLRVA…DGAKPGQQVK (103 aa)).

This sequence belongs to the class-I aminoacyl-tRNA synthetase family. MetG type 1 subfamily. In terms of assembly, homodimer. Zn(2+) serves as cofactor.

The protein resides in the cytoplasm. It carries out the reaction tRNA(Met) + L-methionine + ATP = L-methionyl-tRNA(Met) + AMP + diphosphate. In terms of biological role, is required not only for elongation of protein synthesis but also for the initiation of all mRNA translation through initiator tRNA(fMet) aminoacylation. This Salmonella agona (strain SL483) protein is Methionine--tRNA ligase.